We begin with the raw amino-acid sequence, 200 residues long: UPF0316 protein SAUSA300_1892 (200 aa).

3 helical membrane-spanning segments follow: residues 8–28 (PWLM…FLTM), 40–60 (IAAS…GLVM), and 66–86 (IQNI…GMKI).

This sequence belongs to the UPF0316 family.

The protein localises to the cell membrane. This chain is UPF0316 protein SAUSA300_1892, found in Staphylococcus aureus (strain USA300).